A 3411-amino-acid polypeptide reads, in one-letter code: Genome polyprotein (3411 aa).

The Cytoplasmic segment spans residues 1-104 (MSGRKAQGKT…LSSRKRRSHD (104 aa)). Residues 38-72 (PGPSRGVQGFIFFFLFNILTGKKITAQLKRLWKML) form a hydrophobic; homodimerization of capsid protein C region. A propeptide spans 102–121 (SHDVLTVQFLILGMLLMTGG) (ER anchor for the capsid protein C, removed in mature form by serine protease NS3). A helical transmembrane segment spans residues 105 to 125 (VLTVQFLILGMLLMTGGVTLM). At 126–244 (RKNRWLLLNV…GERQLQKIER (119 aa)) the chain is on the extracellular side. N-linked (GlcNAc...) asparagine; by host glycosylation is found at N134 and N150. Residues 245-265 (WFVRNPFFAVTALTIAYLVGS) form a helical membrane-spanning segment. The Cytoplasmic segment spans residues 266–270 (NMTQR). Residues 271-285 (VVIALLVLAVGPAYS) form a helical membrane-spanning segment. The Extracellular segment spans residues 286–730 (AHCIGVADRD…TVFGSAFQGL (445 aa)). Cystine bridges form between C288/C315, C345/C401, C345/C406, C359/C390, C377/C401, C377/C406, C467/C568, and C585/C615. The tract at residues 383–396 (DRGWGNGCGLFGKG) is fusion peptide. The chain crosses the membrane as a helical span at residues 731-751 (FGGLNWITKVIMGAVLIWVGF). Residues 752–757 (NTRNMT) lie on the Cytoplasmic side of the membrane. A helical membrane pass occupies residues 758–778 (MSMSMILVGVIMMFLSLGVGA). At 779-1132 (DQGCAINFGK…LVRSWVTAGE (354 aa)) the chain is on the extracellular side. 6 cysteine pairs are disulfide-bonded: C782/C793, C833/C921, C957/C1002, C1058/C1107, C1069/C1091, and C1090/C1094. Residues N908 and N986 are each glycosylated (N-linked (GlcNAc...) asparagine; by host). The helical transmembrane segment at 1133 to 1153 (IHAVPFGLVSMMIAMEVVLRK) threads the bilayer. Topologically, residues 1154–1201 (RQGPKQVLVGGVVLLGAMLVGQVTLLDLLELTVAVGLHFHEMNNGGDA) are cytoplasmic. Residues 1202 to 1222 (MYMALIAAFSVRPGLLIGFGL) form a helical membrane-spanning segment. At 1223-1287 (RTLWSPRERL…ILPLMALLTP (65 aa)) the chain is on the lumenal side. The helical transmembrane segment at 1288–1308 (VTMAEVRLATMLFCTVVIIGV) threads the bilayer. The Cytoplasmic segment spans residues 1309-1355 (LHQNSKDTSMQKTIPLVALTLTSYLGLTQPFLGLCAFLATRIFGRRS). Residues 1356–1376 (IPVNEALAATGLVGVLAGLAF) form a helical membrane-spanning segment. Over 1377-1378 (QE) the chain is Lumenal. Residues 1379-1399 (MENFLGPIAVGGILMMLVSVA) form a helical membrane-spanning segment. Over 1400 to 1456 (GRVDGLELKKLGEVSWEEEAEISGSSARYDVALSEQGEFKLLSEEKVPWDQVVMTSL) the chain is Cytoplasmic. Positions 1407–1446 (LKKLGEVSWEEEAEISGSSARYDVALSEQGEFKLLSEEKV) are interacts with and activates NS3 protease. Residues 1457–1477 (ALVGAAIHPFALLLVLAGWLF) constitute an intramembrane region (helical). The Cytoplasmic portion of the chain corresponds to 1478–2157 (HVRRARRSGD…RNALSMMPEA (680 aa)). The 181-residue stretch at 1485–1665 (SGDVLWDIPT…EVKEEGKEEL (181 aa)) folds into the Peptidase S7 domain. Residues H1537, D1561, and S1622 each act as charge relay system; for serine protease NS3 activity in the active site. The Helicase ATP-binding domain occupies 1669–1825 (PTMLKKGKTT…HSNGEIEDVQ (157 aa)). Residues 1673-1676 (KKGK) are important for RNA-binding. 1682–1689 (FHPGAGKT) contacts ATP. The short motif at 1773–1776 (DEAH) is the DEAH box element. One can recognise a Helicase C-terminal domain in the interval 1820-1997 (EIEDVQTDIP…VRGGMVAPLY (178 aa)). Residue K1877 is modified to N6-acetyllysine; by host. The interval 1942–1961 (AAQRRGRIGRNPNRDGDSYY) is disordered. The chain crosses the membrane as a helical span at residues 2158 to 2178 (MTIVMLFLLAGLLTSGMVIFF). Residues 2179–2186 (MSPKGISR) lie on the Lumenal side of the membrane. The helical intramembrane region spans 2187–2207 (MSMAKGTMAGCGYLMFLGGVE). At 2208 to 2209 (PT) the chain is on the lumenal side. The chain crosses the membrane as a helical span at residues 2210 to 2230 (HISYIMLIFFVLMVVVIPEPG). At 2231 to 2241 (QQRSIQDNQVA) the chain is on the cytoplasmic side. The chain crosses the membrane as a helical span at residues 2242–2256 (FLIIGILTLVSVVAA). Residues 2257 to 2293 (NELGMLEKTKEDLFGKKNLIPSGASPWSWPDLDLKPG) are Lumenal-facing. The helical intramembrane region spans 2294 to 2314 (AAWTVYVGIVTMLSPMLHHWI). The Lumenal portion of the chain corresponds to 2315–2360 (KVEYGNLSLSGIAQSASVLSFMDKGIPFMKMNISVIMLLVSGWNSI). A helical membrane pass occupies residues 2361 to 2380 (TVMPLLCGIGCAMLHWSLIL). Topologically, residues 2381 to 2421 (PGIKAQQSKLAQRRVFHGVAKNPVVDGNPTVDIEEAPEMPA) are cytoplasmic. Residues 2422 to 2442 (LYEKKLALYLLLALSLASVAM) form a helical membrane-spanning segment. Residues 2443–2445 (CRT) are Lumenal-facing. The helical transmembrane segment at 2446 to 2466 (PFSLDEGIVLASAALGPLIEG) threads the bilayer. Over 2467 to 3411 (NTSLLWNGPM…DADLQPGELI (945 aa)) the chain is Cytoplasmic. Residues 2507–2771 (GTANGKTLGE…DVTLPIGTRS (265 aa)) enclose the mRNA cap 0-1 NS5-type MT domain. S2562 contacts S-adenosyl-L-methionine. S2562 carries the phosphoserine modification. Catalysis depends on K2567, which acts as the For 2'-O-MTase activity. G2592, W2593, T2610, L2611, D2637, and V2638 together coordinate S-adenosyl-L-methionine. The For 2'-O-MTase activity role is filled by D2652. An S-adenosyl-L-methionine-binding site is contributed by I2653. Catalysis depends on for 2'-O-MTase activity residues K2688 and E2724. Y2726 is a binding site for S-adenosyl-L-methionine. The Nuclear localization signal signature appears at 2878–2911 (RKIMKVVNRWLFRHLAREKNPRLCTKEEFIAKVR). Zn(2+) contacts are provided by E2945, H2949, C2954, and C2957. One can recognise a RdRp catalytic domain in the interval 3035–3187 (GGLYADDTAG…RPIDDRFGLA (153 aa)). Positions 3222, 3238, and 3357 each coordinate Zn(2+).

In the N-terminal section; belongs to the class I-like SAM-binding methyltransferase superfamily. mRNA cap 0-1 NS5-type methyltransferase family. As to quaternary structure, homodimer. Interacts (via N-terminus) with host EXOC1 (via C-terminus); this interaction results in EXOC1 degradation through the proteasome degradation pathway. In terms of assembly, forms heterodimers with envelope protein E in the endoplasmic reticulum and Golgi. Homodimer; in the endoplasmic reticulum and Golgi. Interacts with protein prM. Interacts with non-structural protein 1. As to quaternary structure, homodimer; Homohexamer when secreted. Interacts with envelope protein E. In terms of assembly, interacts (via N-terminus) with serine protease NS3. Forms a heterodimer with serine protease NS3. May form homooligomers. As to quaternary structure, forms a heterodimer with NS2B. Interacts with non-structural protein 2A (via N-terminus). Interacts with NS4B. Interacts with unphosphorylated RNA-directed RNA polymerase NS5; this interaction stimulates RNA-directed RNA polymerase NS5 guanylyltransferase activity. NS3 interacts with host PDCD6IP; this interaction contributes to virion release. In terms of assembly, interacts with serine protease NS3. Homodimer. Interacts with host STAT2; this interaction prevents the establishment of cellular antiviral state. Interacts with serine protease NS3. Interacts with host TRIM23; this interaction leads to NS5 ubiquitination. Specific enzymatic cleavages in vivo yield mature proteins. The nascent capsid protein C contains a C-terminal hydrophobic domain that act as a signal sequence for translocation of prM into the lumen of the ER. Mature capsid protein C is cleaved at a site upstream of this hydrophobic domain by NS3. prM is cleaved in post-Golgi vesicles by a host furin, releasing the mature small envelope protein M, and peptide pr. Non-structural protein 2A-alpha, a C-terminally truncated form of non-structural protein 2A, results from partial cleavage by NS3. Specific enzymatic cleavages in vivo yield mature proteins peptide 2K acts as a signal sequence and is removed from the N-terminus of NS4B by the host signal peptidase in the ER lumen. Signal cleavage at the 2K-4B site requires a prior NS3 protease-mediated cleavage at the 4A-2K site. In terms of processing, cleaved in post-Golgi vesicles by a host furin, releasing the mature small envelope protein M, and peptide pr. This cleavage is incomplete as up to 30% of viral particles still carry uncleaved prM. Post-translationally, N-glycosylated. N-glycosylated. The excreted form is glycosylated and this is required for efficient secretion of the protein from infected cells. In terms of processing, polyubiquitinated; ubiquitination is probably mediated by host TRIM23 and is prerequisite for NS5-STAT2 interaction. NS5 is not ISGylated or sumoylated. Post-translationally, acetylated by host KAT5. Acetylation modulates NS3 RNA-binding and unwinding activities and plays an important positive role for viral replication. Phosphorylated on serines residues. This phosphorylation may trigger NS5 nuclear localization.

The protein localises to the virion. It localises to the host nucleus. Its subcellular location is the host cytoplasm. The protein resides in the host perinuclear region. It is found in the secreted. The protein localises to the virion membrane. It localises to the host endoplasmic reticulum membrane. It carries out the reaction Selective hydrolysis of -Xaa-Xaa-|-Yaa- bonds in which each of the Xaa can be either Arg or Lys and Yaa can be either Ser or Ala.. The enzyme catalyses RNA(n) + a ribonucleoside 5'-triphosphate = RNA(n+1) + diphosphate. It catalyses the reaction a ribonucleoside 5'-triphosphate + H2O = a ribonucleoside 5'-diphosphate + phosphate + H(+). The catalysed reaction is ATP + H2O = ADP + phosphate + H(+). It carries out the reaction a 5'-end (5'-triphosphoguanosine)-ribonucleoside in mRNA + S-adenosyl-L-methionine = a 5'-end (N(7)-methyl 5'-triphosphoguanosine)-ribonucleoside in mRNA + S-adenosyl-L-homocysteine. The enzyme catalyses a 5'-end (N(7)-methyl 5'-triphosphoguanosine)-ribonucleoside in mRNA + S-adenosyl-L-methionine = a 5'-end (N(7)-methyl 5'-triphosphoguanosine)-(2'-O-methyl-ribonucleoside) in mRNA + S-adenosyl-L-homocysteine + H(+). Plays a role in virus budding by binding to the cell membrane and gathering the viral RNA into a nucleocapsid that forms the core of a mature virus particle. During virus entry, may induce genome penetration into the host cytoplasm after hemifusion induced by the surface proteins. Can migrate to the cell nucleus where it modulates host functions. Its function is as follows. Inhibits RNA silencing by interfering with host Dicer. Functionally, prevents premature fusion activity of envelope proteins in trans-Golgi by binding to envelope protein E at pH6.0. After virion release in extracellular space, gets dissociated from E dimers. In terms of biological role, acts as a chaperone for envelope protein E during intracellular virion assembly by masking and inactivating envelope protein E fusion peptide. prM is the only viral peptide matured by host furin in the trans-Golgi network probably to avoid catastrophic activation of the viral fusion activity in acidic Golgi compartment prior to virion release. prM-E cleavage is inefficient, and many virions are only partially matured. These uncleaved prM would play a role in immune evasion. May play a role in virus budding. Exerts cytotoxic effects by activating a mitochondrial apoptotic pathway through M ectodomain. May display a viroporin activity. Its function is as follows. Binds to host cell surface receptor and mediates fusion between viral and cellular membranes. Envelope protein is synthesized in the endoplasmic reticulum in the form of heterodimer with protein prM. They play a role in virion budding in the ER, and the newly formed immature particle is covered with 60 spikes composed of heterodimer between precursor prM and envelope protein E. The virion is transported to the Golgi apparatus where the low pH causes dissociation of PrM-E heterodimers and formation of E homodimers. prM-E cleavage is inefficient, and many virions are only partially matured. These uncleaved prM would play a role in immune evasion. Functionally, involved in immune evasion, pathogenesis and viral replication. Once cleaved off the polyprotein, is targeted to three destinations: the viral replication cycle, the plasma membrane and the extracellular compartment. Essential for viral replication. Required for formation of the replication complex and recruitment of other non-structural proteins to the ER-derived membrane structures. Excreted as a hexameric lipoparticle that plays a role against host immune response. Antagonizing the complement function. Binds to the host macrophages and dendritic cells. Inhibits signal transduction originating from Toll-like receptor 3 (TLR3). In terms of biological role, component of the viral RNA replication complex that functions in virion assembly and antagonizes the host immune response. Required cofactor for the serine protease function of NS3. May have membrane-destabilizing activity and form viroporins. Its function is as follows. Displays three enzymatic activities: serine protease, NTPase and RNA helicase. NS3 serine protease, in association with NS2B, performs its autocleavage and cleaves the polyprotein at dibasic sites in the cytoplasm: C-prM, NS2A-NS2B, NS2B-NS3, NS3-NS4A, NS4A-2K and NS4B-NS5. NS3 RNA helicase binds RNA and unwinds dsRNA in the 3' to 5' direction. Also plays a role in virus assembly. Functionally, regulates the ATPase activity of the NS3 helicase activity. NS4A allows NS3 helicase to conserve energy during unwinding. In terms of biological role, functions as a signal peptide for NS4B and is required for the interferon antagonism activity of the latter. Induces the formation of ER-derived membrane vesicles where the viral replication takes place. Inhibits interferon (IFN)-induced host STAT1 phosphorylation and nuclear translocation, thereby preventing the establishment of cellular antiviral state by blocking the IFN-alpha/beta pathway. Its function is as follows. Replicates the viral (+) and (-) RNA genome, and performs the capping of genomes in the cytoplasm. NS5 methylates viral RNA cap at guanine N-7 and ribose 2'-O positions. Besides its role in RNA genome replication, also prevents the establishment of cellular antiviral state by blocking the interferon-alpha/beta (IFN-alpha/beta) signaling pathway. IFN-I induces binding of NS5 to host IFN-activated transcription factor STAT2, preventing its transcriptional activity. Host TRIM23 is the E3 ligase that interacts with and polyubiquitinates NS5 to promote its binding to STAT2 and trigger IFN-I signaling inhibition. The protein is Genome polyprotein of Aedes aegypti (Yellowfever mosquito).